A 311-amino-acid polypeptide reads, in one-letter code: Tryptophan 2,3-dioxygenase (311 aa).

The disordered stretch occupies residues 1-37 (MQPPGGDAPAGCPFSGARAAQPAQAAHEAPHVPGEAD). The span at 17–27 (ARAAQPAQAAH) shows a compositional bias: low complexity. Residues 80–84 (FIIQH), tyrosine 142, and arginine 146 contribute to the substrate site. Histidine 269 serves as a coordination point for heme. Substrate is bound at residue threonine 283.

Belongs to the tryptophan 2,3-dioxygenase family. As to quaternary structure, homotetramer. It depends on heme as a cofactor.

The enzyme catalyses L-tryptophan + O2 = N-formyl-L-kynurenine. It participates in amino-acid degradation; L-tryptophan degradation via kynurenine pathway; L-kynurenine from L-tryptophan: step 1/2. Heme-dependent dioxygenase that catalyzes the oxidative cleavage of the L-tryptophan (L-Trp) pyrrole ring and converts L-tryptophan to N-formyl-L-kynurenine. Catalyzes the oxidative cleavage of the indole moiety. This is Tryptophan 2,3-dioxygenase from Burkholderia cenocepacia (strain ATCC BAA-245 / DSM 16553 / LMG 16656 / NCTC 13227 / J2315 / CF5610) (Burkholderia cepacia (strain J2315)).